We begin with the raw amino-acid sequence, 591 residues long: Aspartate--tRNA ligase (591 aa).

Glutamate 171 provides a ligand contact to L-aspartate. An aspartate region spans residues glutamine 195–lysine 198. Arginine 217 serves as a coordination point for L-aspartate. Residues arginine 217–glutamate 219 and glutamine 226 contribute to the ATP site. Histidine 448 lines the L-aspartate pocket. Glutamate 482 lines the ATP pocket. Arginine 489 contacts L-aspartate. Glycine 534–arginine 537 lines the ATP pocket.

It belongs to the class-II aminoacyl-tRNA synthetase family. Type 1 subfamily. In terms of assembly, homodimer.

The protein resides in the cytoplasm. The catalysed reaction is tRNA(Asp) + L-aspartate + ATP = L-aspartyl-tRNA(Asp) + AMP + diphosphate. In terms of biological role, catalyzes the attachment of L-aspartate to tRNA(Asp) in a two-step reaction: L-aspartate is first activated by ATP to form Asp-AMP and then transferred to the acceptor end of tRNA(Asp). The chain is Aspartate--tRNA ligase from Edwardsiella ictaluri (strain 93-146).